A 508-amino-acid polypeptide reads, in one-letter code: U4/U6 small nuclear ribonucleoprotein Prp31 (508 aa).

Residues 1-45 (MSLADELLADLEEAGEEDGLYPGGEEGESDGEPGERQVDGGLEDI) are disordered. A compositionally biased stretch (acidic residues) spans 7–32 (LLADLEEAGEEDGLYPGGEEGESDGE). 2 coiled-coil regions span residues 96–131 (EADP…KYSK) and 192–226 (DDEL…MSFI). A Nop domain is found at 226–344 (IAPNLSIIVG…IERKFDKWQE (119 aa)). 2 disordered regions span residues 345–368 (PPPV…RGGR) and 442–461 (QSMT…GTSS). A Nuclear localization signal (NLS) motif is present at residues 362-375 (RKKRGGRRYRKMKE).

The protein belongs to the PRP31 family. As to quaternary structure, identified in the spliceosome B complex. Component of the U4/U6-U5 tri-snRNP complex. Component of some MLL1/MLL complex.

It localises to the nucleus. Its subcellular location is the nucleus speckle. It is found in the cajal body. Its function is as follows. Involved in pre-mRNA splicing as component of the spliceosome. Required for the assembly of the U4/U5/U6 tri-snRNP complex, one of the building blocks of the spliceosome. This Danio rerio (Zebrafish) protein is U4/U6 small nuclear ribonucleoprotein Prp31 (prpf31).